A 910-amino-acid polypeptide reads, in one-letter code: DNA mismatch repair protein MutS (910 aa).

Positions 1–11 are enriched in basic and acidic residues; sequence MEAKVEEKEPE. The tract at residues 1–21 is disordered; sequence MEAKVEEKEPEPVENAGPDAP. ATP is bound at residue 658–665; sequence GPNMGGKS.

It belongs to the DNA mismatch repair MutS family.

Its function is as follows. This protein is involved in the repair of mismatches in DNA. It is possible that it carries out the mismatch recognition step. This protein has a weak ATPase activity. In Brucella melitensis biotype 1 (strain ATCC 23456 / CCUG 17765 / NCTC 10094 / 16M), this protein is DNA mismatch repair protein MutS.